The chain runs to 149 residues: Calmodulin (149 aa).

EF-hand domains lie at 8-43, 44-79, 81-116, and 117-149; these read EQIA…LGQN, PTEA…KMAD, DTEE…LGEK, and LSDE…MLSK. Ca(2+) contacts are provided by Asp21, Asp23, Asp25, Asn27, Glu32, Asp57, Asp59, Asn61, Thr63, Glu68, Asp94, Asp96, Asn98, and Glu105. Lys116 carries the post-translational modification N6,N6,N6-trimethyllysine. 5 residues coordinate Ca(2+): Asp130, Asp132, Asp134, Gln136, and Glu141.

The protein belongs to the calmodulin family.

Calmodulin mediates the control of a large number of enzymes, ion channels and other proteins by Ca(2+). Among the enzymes to be stimulated by the calmodulin-Ca(2+) complex are a number of protein kinases and phosphatases. The polypeptide is Calmodulin (Physarum polycephalum (Slime mold)).